A 427-amino-acid chain; its full sequence is MALRCINNLEIFLRRCTAPTLHRCCVASSRTAHTASSSKGSGGDNSKDQENNGQNKSGYRRFGWRSVFQFCVPFSLGALVSAVLIEGHRDELTPTISARSLKGRRNEFNFIADVVAGCGDSVVYIEIKDTRHFDYFSGQPITASNGSGFVIEQNGLILTNAHVVINKPHTMVQVRLSDGRTFPATIEDVDQTSDLATLRIHVSGLPVMKLGKSSTLRSGEWVVALGSPLALSNTVTAGVISATQRASQELGLRNRDINYLQTDAAITFGNSGGPLVNLDGEAIGVNSMKVTAGISFAIPIDYVKVFLERAAERRKKGSAHKTGYPVKRYMGITMLTLTPDILFELKSRSQNMPNNLMHGVLVWKVIVGSPAHSGGLQPGDIVTHINKKEIKNSSDVYDALAEGRKDLEIVILRGVKQMHVKITPEDP.

Residues 33-57 (HTASSSKGSGGDNSKDQENNGQNKS) are disordered. A helical membrane pass occupies residues 67–87 (VFQFCVPFSLGALVSAVLIEG). The short motif at 78–81 (ALVS) is the IAP-binding element. Residues 144-307 (SNGSGFVIEQ…IPIDYVKVFL (164 aa)) are serine protease. Active-site charge relay system residues include His162, Asp194, and Ser271. One can recognise a PDZ domain in the interval 330–415 (MGITMLTLTP…DLEIVILRGV (86 aa)).

This sequence belongs to the peptidase S1C family. Interacts with th/DIAP1 (via BIR 2 domain).

It is found in the mitochondrion intermembrane space. It localises to the mitochondrion membrane. The enzyme catalyses Cleavage of non-polar aliphatic amino-acids at the P1 position, with a preference for Val, Ile and Met. At the P2 and P3 positions, Arg is selected most strongly with a secondary preference for other hydrophilic residues.. In terms of biological role, serine protease that shows proteolytic activity against a non-specific substrate beta-casein. Promotes or induces cell death either by direct binding to and inhibition of BIRC proteins (also called inhibitor of apoptosis proteins, IAPs), leading to an increase in caspase activity, or by a BIRC inhibition-independent, caspase-independent and serine protease activity-dependent mechanism. Can antagonize antiapoptotic activity of th/Diap1 by directly inducing the degradation of th/Diap1. In Drosophila persimilis (Fruit fly), this protein is Serine protease HTRA2, mitochondrial.